Reading from the N-terminus, the 135-residue chain is Sex-regulated protein janus-A (135 aa).

A substrate-binding site is contributed by lysine 37. The Proton acceptor role is filled by histidine 63. Substrate is bound at residue 104–106 (SQG).

It belongs to the janus family.

JanA and janB regulate somatic sex differentiation. This Drosophila orena (Fruit fly) protein is Sex-regulated protein janus-A (janA).